A 320-amino-acid polypeptide reads, in one-letter code: MKTESEVGHHMASSTLNVDAFRDYLETQLKRLPPLPDVEQISPRVIRVLGQNPGEFTLQGTNTYIVGTGRSRLIIDTGQGSPQWIENVVFLLESMGIILSHVLLTHWHGDHTGGVADLIKSYPHLTTAIYKNSPARDQNNIIDGQSFSVEGATVRALHTPGHAHDHMCFVLVEENAMFTGDNILGHGTTAVEELGPIMSSWRRMLTENCERGYPGHGQLIHNLNHKITEQLASKVRRENLVLDALRCIRGQQGPQMAGRRMSINPKQLVILVHGKGINENVSTLVLEPFLIETLRKLAADGIVGFEICNGEKRWFPVQTV.

Zn(2+) contacts are provided by His-106, His-108, Asp-110, and His-111. Asp-110 serves as the catalytic Proton donor/acceptor.

This sequence belongs to the metallo-beta-lactamase superfamily. Requires Zn(2+) as cofactor.

It functions in the pathway secondary metabolite biosynthesis. Functionally, lactamase-like protein; part of the gene cluster that mediates the biosynthesis of dibenzodioxocinones such as pestalotiollide B, a novel class of inhibitors against cholesterol ester transfer protein (CEPT). The biosynthesis initiates from condensation of acetate and malonate units catalyzed by the non-reducing PKS pks8/GME11356. Pks8/GME11356 lacks a thioesterase (TE) domain, which is important to the cyclizing of the third ring of atrochrysone carboxylic acid, and the esterase GME11355 might play the role of TE and catalyzes the cyclization reaction of the C ring. The lactamase-like protein GME11357 (or other beta-lactamases in Pestalotiopsis microspora) probably hydrolyzes the thioester bond between the ACP of pks8/GME11356 and the intermediate to release atrochrysone carboxylic acid, which is spontaneously dehydrates to form endocrocin anthrone. Endocrocin anthrone is further converted to emodin via the endocrocin intermediate. Emodin is then oxidized by several enzymes such as the Baeyer-Villiger oxidase GME11358, the oxidoreductase GME11367, the short chain dehydrogenase/reductase GME11373, as well as by other oxidoreductases from the cluster, to modify the A and C rings and open the B ring, and finally yield monodictyphenone. The prenyltransferase GME11375 may catalyze the addition reaction between the C5 side chains and the carbon bone of dibenzodioxocinones. The remaining biochemical reactions to the final product dibenzodioxocinones should be methylation catalyzed by methyltransferase GME11366 and reduction and lactonization reaction catalyzed by a series of oxidordeuctases. The chain is Lactamase-like protein GME11357 from Pestalotiopsis microspora.